The following is a 119-amino-acid chain: Large ribosomal subunit protein bL20 (119 aa).

It belongs to the bacterial ribosomal protein bL20 family.

Functionally, binds directly to 23S ribosomal RNA and is necessary for the in vitro assembly process of the 50S ribosomal subunit. It is not involved in the protein synthesizing functions of that subunit. This chain is Large ribosomal subunit protein bL20, found in Nitrosomonas eutropha (strain DSM 101675 / C91 / Nm57).